An 84-amino-acid polypeptide reads, in one-letter code: Large ribosomal subunit protein bL27 (84 aa).

Residues 1-23 (MAHKKGASSSRNGRESAAQRLGV) are disordered.

Belongs to the bacterial ribosomal protein bL27 family.

The chain is Large ribosomal subunit protein bL27 from Salinispora arenicola (strain CNS-205).